Here is a 419-residue protein sequence, read N- to C-terminus: Phosphatidylcholine:ceramide cholinephosphotransferase 1 (419 aa).

Residues 13 to 76 (WSPKKVADWL…LDMIETLKME (64 aa)) form the SAM domain. Phosphoserine is present on Ser14. 5 consecutive transmembrane segments (helical) span residues 142-162 (LLAF…ISVV), 190-210 (FSIC…QWLL), 221-241 (FFCI…VTTL), 282-302 (MCGD…YLFI), and 310-330 (LWWY…CILL). His291 is a catalytic residue. Over 331-419 (AHDHYTVDVV…VKYSRLVNDT (89 aa)) the chain is Cytoplasmic. Residues His334 and Asp338 contribute to the active site.

This sequence belongs to the sphingomyelin synthase family.

The protein resides in the golgi apparatus membrane. It carries out the reaction an N-acylsphing-4-enine + a 1,2-diacyl-sn-glycero-3-phosphocholine = a sphingomyelin + a 1,2-diacyl-sn-glycerol. The catalysed reaction is 1-(9Z-octadecenoyl)-2-acyl-sn-3-glycerol + a sphingomyelin = a 1-(9Z-octadecenoyl)-2-acyl-sn-glycero-3-phosphocholine + an N-acylsphing-4-enine. It catalyses the reaction N-hexadecanoylsphinganine + a 1,2-diacyl-sn-glycero-3-phosphocholine = N-hexadecanoyl-sphinganine-1-phosphocholine + a 1,2-diacyl-sn-glycerol. The enzyme catalyses N-hexadecanoyl-(4R)-hydroxysphinganine + a 1,2-diacyl-sn-glycero-3-phosphocholine = N-hexadecanoyl-(4R)-hydroxysphinganine-phosphocholine + a 1,2-diacyl-sn-glycerol. It carries out the reaction an N-acylsphing-4-enine + a 1,2-diacyl-sn-glycero-3-phosphoethanolamine = an N-acylsphing-4-enine 1-phosphoethanolamine + a 1,2-diacyl-sn-glycerol. Its pathway is sphingolipid metabolism. Major sphingomyelin synthase at the Golgi apparatus. Catalyzes the reversible transfer of phosphocholine moiety in sphingomyelin biosynthesis: in the forward reaction transfers phosphocholine head group of phosphatidylcholine (PC) on to ceramide (CER) to form ceramide phosphocholine (sphingomyelin, SM) and diacylglycerol (DAG) as by-product, and in the reverse reaction transfers phosphocholine from SM to DAG to form PC and CER. The direction of the reaction depends on the levels of CER and DAG in Golgi membranes. Converts the newly synthesized CER, that is transported from the endoplasmic reticulum to the trans-Golgi by the Cer transport protein (CERT), to SM. Can form a heteromeric complex with glucosylceramide synthase (GCS) increasing SMS activity and reducing glucosylceramide synthesis, a critical mechanism that controls the metabolic fate of CER in the Golgi. Does not use free phosphorylcholine or CDP-choline as donor. Can also transfer phosphoethanolamine head group of phosphatidylethanolamine (PE) on to CER to form ceramide phosphoethanolamine (CPE). Regulates receptor-mediated signal transduction via mitogenic DAG and proapoptotic CER, as well as via SM, a structural component of membrane rafts that serve as platforms for signal transduction and protein sorting. Plays a role in secretory transport via regulation of DAG pool at the Golgi apparatus and its downstream effects on PRKD1. The sequence is that of Phosphatidylcholine:ceramide cholinephosphotransferase 1 (Sgms1) from Rattus norvegicus (Rat).